The sequence spans 202 residues: Methylthioribulose-1-phosphate dehydratase (202 aa).

The Zn(2+) site is built by H93 and H95.

The protein belongs to the aldolase class II family. MtnB subfamily. It depends on Zn(2+) as a cofactor.

The enzyme catalyses 5-(methylsulfanyl)-D-ribulose 1-phosphate = 5-methylsulfanyl-2,3-dioxopentyl phosphate + H2O. The protein operates within amino-acid biosynthesis; L-methionine biosynthesis via salvage pathway; L-methionine from S-methyl-5-thio-alpha-D-ribose 1-phosphate: step 2/6. Its function is as follows. Catalyzes the dehydration of methylthioribulose-1-phosphate (MTRu-1-P) into 2,3-diketo-5-methylthiopentyl-1-phosphate (DK-MTP-1-P). The sequence is that of Methylthioribulose-1-phosphate dehydratase from Klebsiella pneumoniae (strain 342).